Here is a 262-residue protein sequence, read N- to C-terminus: Thiazole synthase (262 aa).

The active-site Schiff-base intermediate with DXP is the K104. 1-deoxy-D-xylulose 5-phosphate contacts are provided by residues G165, A191 to G192, and N213 to T214.

This sequence belongs to the ThiG family. Homotetramer. Forms heterodimers with either ThiH or ThiS.

The protein localises to the cytoplasm. The enzyme catalyses [ThiS sulfur-carrier protein]-C-terminal-Gly-aminoethanethioate + 2-iminoacetate + 1-deoxy-D-xylulose 5-phosphate = [ThiS sulfur-carrier protein]-C-terminal Gly-Gly + 2-[(2R,5Z)-2-carboxy-4-methylthiazol-5(2H)-ylidene]ethyl phosphate + 2 H2O + H(+). Its pathway is cofactor biosynthesis; thiamine diphosphate biosynthesis. Its function is as follows. Catalyzes the rearrangement of 1-deoxy-D-xylulose 5-phosphate (DXP) to produce the thiazole phosphate moiety of thiamine. Sulfur is provided by the thiocarboxylate moiety of the carrier protein ThiS. In vitro, sulfur can be provided by H(2)S. This chain is Thiazole synthase, found in Alkalilimnicola ehrlichii (strain ATCC BAA-1101 / DSM 17681 / MLHE-1).